The following is a 105-amino-acid chain: Large ribosomal subunit protein uL24 (105 aa).

This sequence belongs to the universal ribosomal protein uL24 family. As to quaternary structure, part of the 50S ribosomal subunit.

Functionally, one of two assembly initiator proteins, it binds directly to the 5'-end of the 23S rRNA, where it nucleates assembly of the 50S subunit. Its function is as follows. One of the proteins that surrounds the polypeptide exit tunnel on the outside of the subunit. The protein is Large ribosomal subunit protein uL24 of Mycobacterium sp. (strain JLS).